We begin with the raw amino-acid sequence, 91 residues long: Secretoglobin family 3A member 2 (91 aa).

The N-terminal stretch at 1–21 (MKLVSIFLLVTIGICGYSATA) is a signal peptide.

Belongs to the secretoglobin family. UGRP subfamily. Homodimer; disulfide-linked. Monomer. Interacts with APOA1. In terms of tissue distribution, highly expressed in lung where it localizes to epithelial cells of the trachea, bronchus and bronchioles (at protein level). Expressed in club cells of the bronchioles. Also detected in the anterior and posterior lobes of the pituitary gland where it may localize to gonadotropic cells (at protein level). Not detected in other tissues tested.

The protein resides in the secreted. Its function is as follows. Secreted cytokine-like protein. Binds to the scavenger receptor MARCO. Can also bind to pathogens including the Gram-positive bacterium L.monocytogenes, the Gram-negative bacterium P.aeruginosa, and yeast. Strongly inhibits phospholipase A2 (PLA2G1B) activity. Seems to have anti-inflammatory effects in respiratory epithelium. Also has anti-fibrotic activity in lung. May play a role in fetal lung development and maturation. Promotes branching morphogenesis during early stages of lung development. In the pituitary, may inhibit production of follicle-stimulating hormone (FSH) and luteinizing hormone (LH). In Mus musculus (Mouse), this protein is Secretoglobin family 3A member 2 (Scgb3a2).